The following is a 20-amino-acid chain: Dihydrolipoamide-residue succinyltransferase component of 2-oxoglutarate dehydrogenase complex (20 aa).

This sequence belongs to the 2-oxoacid dehydrogenase family. In terms of assembly, forms a 24-polypeptide structural core with octahedral symmetry. Requires (R)-lipoate as cofactor.

The protein localises to the mitochondrion membrane. The catalysed reaction is N(6)-[(R)-dihydrolipoyl]-L-lysyl-[protein] + succinyl-CoA = N(6)-[(R)-S(8)-succinyldihydrolipoyl]-L-lysyl-[protein] + CoA. It functions in the pathway amino-acid degradation; L-lysine degradation via saccharopine pathway; glutaryl-CoA from L-lysine: step 6/6. In terms of biological role, the 2-oxoglutarate dehydrogenase complex catalyzes the overall conversion of 2-oxoglutarate to succinyl-CoA and CO(2). It contains multiple copies of three enzymatic components: 2-oxoglutarate dehydrogenase (E1), dihydrolipoamide succinyltransferase (E2) and lipoamide dehydrogenase (E3). The protein is Dihydrolipoamide-residue succinyltransferase component of 2-oxoglutarate dehydrogenase complex of Solanum tuberosum (Potato).